The sequence spans 66 residues: Potassium channel toxin alpha-KTx 27.3 (66 aa).

Residues 1–17 (MKLMWLLFLCVLAFSIA) form the signal peptide.

This sequence belongs to the short scorpion toxin superfamily. Potassium channel inhibitor family. Alpha-KTx 27 subfamily. In terms of processing, contains 4 disulfide bonds. In terms of tissue distribution, expressed by the venom gland.

Its subcellular location is the secreted. The sequence is that of Potassium channel toxin alpha-KTx 27.3 from Lychas mucronatus (Chinese swimming scorpion).